A 1438-amino-acid polypeptide reads, in one-letter code: DNA polymerase III PolC-type (1438 aa).

Residues 422-578 (YVVFDVETTG…YDTEATAYIF (157 aa)) form the Exonuclease domain.

It belongs to the DNA polymerase type-C family. PolC subfamily.

It is found in the cytoplasm. The catalysed reaction is DNA(n) + a 2'-deoxyribonucleoside 5'-triphosphate = DNA(n+1) + diphosphate. Required for replicative DNA synthesis. This DNA polymerase also exhibits 3' to 5' exonuclease activity. This Staphylococcus aureus (strain MRSA252) protein is DNA polymerase III PolC-type.